Here is a 1155-residue protein sequence, read N- to C-terminus: uncharacterized protein (1155 aa).

The first 19 residues, 1–19, serve as a signal peptide directing secretion; the sequence is MNKNIFITLLISSLLLLSG. A lipid anchor (N-palmitoyl cysteine) is attached at Cys-20. Cys-20 carries S-diacylglycerol cysteine lipidation. 4 helical membrane passes run 291 to 311, 395 to 415, 424 to 444, and 459 to 479; these read VSAILTLYIMFTGFSFLIGNI, LGFIYIILYLIALYFIFFLIF, ALITIGMIIIMGPIFICFMLF, and ISYALQPIILFAGIAFISMII.

Belongs to the TrbL/VirB6 family.

The protein localises to the cell membrane. This is an uncharacterized protein from Rickettsia felis (strain ATCC VR-1525 / URRWXCal2) (Rickettsia azadi).